Consider the following 445-residue polypeptide: Methylenetetrahydrofolate--tRNA-(uracil-5-)-methyltransferase TrmFO (445 aa).

9-14 (GGGLAG) provides a ligand contact to FAD.

Belongs to the MnmG family. TrmFO subfamily. FAD is required as a cofactor.

The protein resides in the cytoplasm. It catalyses the reaction uridine(54) in tRNA + (6R)-5,10-methylene-5,6,7,8-tetrahydrofolate + NADH + H(+) = 5-methyluridine(54) in tRNA + (6S)-5,6,7,8-tetrahydrofolate + NAD(+). It carries out the reaction uridine(54) in tRNA + (6R)-5,10-methylene-5,6,7,8-tetrahydrofolate + NADPH + H(+) = 5-methyluridine(54) in tRNA + (6S)-5,6,7,8-tetrahydrofolate + NADP(+). Its function is as follows. Catalyzes the folate-dependent formation of 5-methyl-uridine at position 54 (M-5-U54) in all tRNAs. The chain is Methylenetetrahydrofolate--tRNA-(uracil-5-)-methyltransferase TrmFO from Rhizorhabdus wittichii (strain DSM 6014 / CCUG 31198 / JCM 15750 / NBRC 105917 / EY 4224 / RW1) (Sphingomonas wittichii).